The sequence spans 994 residues: Chloride channel protein 1 (994 aa).

At 1 to 118 (MERSQSQRHG…VLRRKLGEDW (118 aa)) the chain is on the cytoplasmic side. A helical transmembrane segment spans residues 119 to 150 (IFLVLLGLLMALVSWCMDYVSAKSLQAYKWTY). Residues 151 to 158 (AQMKPSLP) lie on the Extracellular side of the membrane. The chain crosses the membrane as a helical span at residues 159–179 (LQYLAWVTFPLILILFSALFC). Residues 180–183 (QLIS) are Cytoplasmic-facing. The note=Loop between two helices intramembrane region spans 184–189 (PQAVGS). The Selectivity filter part_1 signature appears at 188–192 (GSGIP). S189 serves as a coordination point for chloride. An intramembrane region (helical) is located at residues 190–195 (GIPEMK). Topologically, residues 196–208 (TILRGVVLKEYLT) are cytoplasmic. The helical intramembrane region spans 209 to 224 (LKAFVAKVVALTAGLG). The note=Loop between two helices intramembrane region spans 225–230 (SGIPVG). A Selectivity filter part_2 motif is present at residues 230–234 (GKEGP). Positions 231 to 246 (KEGPFVHIASICAAVL) form an intramembrane region, helical. The Cytoplasmic segment spans residues 247–268 (SKFMSMFSGVYEQPYYYTDILT). 2 consecutive intramembrane regions (helical) follow at residues 269–280 (VGCAVGVGCCFG) and 281–290 (TPLGGVLFSI). Residues 291 to 301 (EVTSTYFAVRN) lie on the Cytoplasmic side of the membrane. Residues 302-321 (YWRGFFAATFSAFVFRVLAV) traverse the membrane as a helical segment. Residues 322 to 347 (WNKDAVTITALFRTNFRMDFPFDLKE) are Extracellular-facing. Residues 348-376 (LPAFAVIGICCGFLGAVFVYLHRQVMLGV) form a helical membrane-spanning segment. Residues 377–390 (RKHKCLSQFLAKHR) are Cytoplasmic-facing. Residues 391 to 408 (LLYPGIVTFVIASLTFPP) form a helical membrane-spanning segment. The Extracellular portion of the chain corresponds to 409–414 (GMGQFM). An intramembrane region (note=Loop between two helices) is located at residues 415 to 418 (AGEL). Residues 419-426 (MPREAIST) constitute an intramembrane region (helical). Residues 427–457 (LFDNNTWVKHIGDPQSLGQSAVWLHPQVNVI) are Extracellular-facing. The segment at residues 458–475 (IIILLFFVMKFWMSIVAT) is an intramembrane region (helical). An intramembrane region (note=Loop between two helices) is located at residues 476–482 (TMPIPCG). Residues 482–486 (GGFMP) carry the Selectivity filter part_3 motif. Positions 483-498 (GFMPVFVLGAAFGRLV) form an intramembrane region, helical. F484 is a chloride binding site. Residues 499–521 (GEIMAMLFPEGILFDDIIYKILP) lie on the Extracellular side of the membrane. Residues 522–538 (GGYAVIGAAALTGAVSH) constitute an intramembrane region (helical). Positions 539-540 (TV) form an intramembrane region, note=Loop between two helices. An intramembrane region (helical) is located at residues 541 to 554 (STAVICFELTGQIA). Residues 555 to 557 (HIL) are Extracellular-facing. Positions 558 to 571 (PMMVAVILANMVAQ) form an intramembrane region, helical. Positions 572 to 575 (SLQP) form an intramembrane region, note=Loop between two helices. Positions 576–578 (SLY) form an intramembrane region, helical. Residue Y578 coordinates chloride. The Cytoplasmic segment spans residues 579–994 (DSIIQVKKLP…DEEDEDELIL (416 aa)). Residues 609-668 (MVRDVKFVSASCTYGELRNLLQATTVKTLPLVDSKDSMILLGSVERSELQSLLQRHLCAE) form the CBS 1 domain. Residues 710-770 (EDEDEDLSRK…PEASDSADQR (61 aa)) form a disordered region. Positions 725 to 739 (TPAPPPPSPPPPPSQ) are enriched in pro residues. Positions 827 to 882 (IDQSPFQLVEQTTLHKTHTLFSLLGLHLAYVTSMGKLRGVLALEELQKAIEGHTKS) constitute a CBS 2 domain. 2 disordered regions span residues 886-954 (LRPP…ARAE) and 971-994 (ELAD…ELIL). S892 carries the phosphoserine modification. A compositionally biased stretch (pro residues) spans 933–943 (PETPVPPPSPE). Acidic residues predominate over residues 985–994 (DEEDEDELIL).

This sequence belongs to the chloride channel (TC 2.A.49) family. ClC-1/CLCN1 subfamily. As to quaternary structure, homodimer. In terms of tissue distribution, predominantly expressed in skeletal muscles.

The protein localises to the cell membrane. It is found in the sarcolemma. The protein resides in the T-tubule. The enzyme catalyses chloride(in) = chloride(out). It carries out the reaction thiocyanate(in) = thiocyanate(out). It catalyses the reaction bromide(in) = bromide(out). The catalysed reaction is nitrate(in) = nitrate(out). The enzyme catalyses iodide(out) = iodide(in). Modulated by membrane voltage with depolarization favouring channel opening and hyperpolarization favouring channel closure. Inhibited by acidic pH and ATP binding due to a shift of voltage dependence of common gating to more positive voltages. Inhibited by 9-anthracene-carboxylic. Voltage-gated chloride channel involved in skeletal muscle excitability. Generates most of the plasma membrane chloride conductance in skeletal muscle fibers, stabilizes the resting membrane potential and contributes to the repolarization phase during action potential firing. Forms a homodimeric channel where each subunit has its own ion conduction pathway. Conducts double-barreled currents controlled by two types of gates, two fast glutamate gates that control each subunit independently and a slow common gate that opens and shuts off both subunits simultaneously. Has a significant open probability at muscle resting potential and is further activated upon membrane depolarization. Permeable to small monovalent anions with ion selectivity for chloride &gt; thiocyanate &gt; bromide &gt; nitrate &gt; iodide. In Mus musculus (Mouse), this protein is Chloride channel protein 1 (Clcn1).